Consider the following 310-residue polypeptide: Porphobilinogen deaminase (310 aa).

Cysteine 242 bears the S-(dipyrrolylmethanemethyl)cysteine mark.

Belongs to the HMBS family. As to quaternary structure, monomer. Dipyrromethane is required as a cofactor.

The enzyme catalyses 4 porphobilinogen + H2O = hydroxymethylbilane + 4 NH4(+). Its pathway is porphyrin-containing compound metabolism; protoporphyrin-IX biosynthesis; coproporphyrinogen-III from 5-aminolevulinate: step 2/4. Its function is as follows. Tetrapolymerization of the monopyrrole PBG into the hydroxymethylbilane pre-uroporphyrinogen in several discrete steps. The sequence is that of Porphobilinogen deaminase from Alcanivorax borkumensis (strain ATCC 700651 / DSM 11573 / NCIMB 13689 / SK2).